A 638-amino-acid chain; its full sequence is Phenylethylamine oxidase (638 aa).

The propeptide occupies 1-2; that stretch reads MT. 296 to 307 serves as a coordination point for substrate; the sequence is YFDTGEYLVGQY. D298 functions as the Proton acceptor in the catalytic mechanism. Residues C317 and C343 are joined by a disulfide bond. Substrate is bound at residue 379-384; sequence IGNYDY. The Schiff-base intermediate with substrate; via topaquinone role is filled by Y382. A 2',4',5'-topaquinone modification is found at Y382. Residues H431, H433, and H592 each contribute to the Cu cation site.

It belongs to the copper/topaquinone oxidase family. As to quaternary structure, homodimer. The cofactor is Cu cation. L-topaquinone is required as a cofactor. In terms of processing, topaquinone (TPQ) is generated by copper-dependent autoxidation of a specific tyrosyl residue.

It catalyses the reaction a primary methyl amine + O2 + H2O = an aldehyde + H2O2 + NH4(+). It carries out the reaction 2-phenylethylamine + O2 + H2O = 2-phenylacetaldehyde + H2O2 + NH4(+). Its function is as follows. Catalyzes the oxidative deamination of phenylethylamine to phenylacetaldehyde with the concomitant production of hydrogen peroxide and ammonia. The protein is Phenylethylamine oxidase of Arthrobacter globiformis.